The following is a 357-amino-acid chain: Uroporphyrinogen decarboxylase (357 aa).

Residues 34–38 (RQAGR), aspartate 83, tyrosine 158, serine 213, and histidine 336 each bind substrate.

This sequence belongs to the uroporphyrinogen decarboxylase family. Homodimer.

The protein resides in the cytoplasm. It catalyses the reaction uroporphyrinogen III + 4 H(+) = coproporphyrinogen III + 4 CO2. It participates in porphyrin-containing compound metabolism; protoporphyrin-IX biosynthesis; coproporphyrinogen-III from 5-aminolevulinate: step 4/4. In terms of biological role, catalyzes the decarboxylation of four acetate groups of uroporphyrinogen-III to yield coproporphyrinogen-III. This is Uroporphyrinogen decarboxylase from Mycolicibacterium paratuberculosis (strain ATCC BAA-968 / K-10) (Mycobacterium paratuberculosis).